A 289-amino-acid chain; its full sequence is Thioredoxin-like protein 1 (289 aa).

The Thioredoxin domain maps to 2–109 (VGVKPVGSDP…EEKIKQHLEN (108 aa)). A disulfide bridge links cysteine 34 with cysteine 37. Serine 113 bears the Phosphoserine mark. One can recognise a PITH domain in the interval 115–285 (EDTDIPKGYM…NDFKRVVGKK (171 aa)).

As to quaternary structure, component of the 19S regulatory cap of the 26S proteasome. Interacts with PSMD14/RPN11. Interacts with, and reduces EEF1A1.

It localises to the cytoplasm. The protein resides in the nucleus. Active thioredoxin with a redox potential of about -250 mV. The polypeptide is Thioredoxin-like protein 1 (Txnl1) (Rattus norvegicus (Rat)).